A 236-amino-acid chain; its full sequence is Chorionic somatomammotropin hormone 1 (236 aa).

An N-terminal signal peptide occupies residues 1-36 (MAPASSHRGHQWICDLVRGSCLLLLLVVSNLLLCQG). An N-linked (GlcNAc...) asparagine glycan is attached at Asn-89. Intrachain disulfides connect Cys-98/Cys-214 and Cys-231/Cys-236.

The protein belongs to the somatotropin/prolactin family.

It is found in the secreted. The sequence is that of Chorionic somatomammotropin hormone 1 (CSH1) from Bos taurus (Bovine).